The sequence spans 279 residues: Thymidylate synthase (279 aa).

DUMP is bound at residue 132–133 (RR). The active-site Nucleophile is Cys-153. Residues 178-181 (RSND), Asn-189, and 219-221 (HIY) each bind dUMP. Asp-181 serves as a coordination point for (6R)-5,10-methylene-5,6,7,8-tetrahydrofolate. Ala-278 serves as a coordination point for (6R)-5,10-methylene-5,6,7,8-tetrahydrofolate.

This sequence belongs to the thymidylate synthase family. Bacterial-type ThyA subfamily. As to quaternary structure, homodimer.

It localises to the cytoplasm. The enzyme catalyses dUMP + (6R)-5,10-methylene-5,6,7,8-tetrahydrofolate = 7,8-dihydrofolate + dTMP. It functions in the pathway pyrimidine metabolism; dTTP biosynthesis. Its function is as follows. Catalyzes the reductive methylation of 2'-deoxyuridine-5'-monophosphate (dUMP) to 2'-deoxythymidine-5'-monophosphate (dTMP) while utilizing 5,10-methylenetetrahydrofolate (mTHF) as the methyl donor and reductant in the reaction, yielding dihydrofolate (DHF) as a by-product. This enzymatic reaction provides an intracellular de novo source of dTMP, an essential precursor for DNA biosynthesis. The chain is Thymidylate synthase from Lactococcus lactis subsp. cremoris (strain SK11).